The following is a 350-amino-acid chain: tRNA uridine(34) hydroxylase (350 aa).

The 95-residue stretch at 146 to 240 (DDPDAVFIDM…YARRARAQGL (95 aa)) folds into the Rhodanese domain. Residue C200 is the Cysteine persulfide intermediate of the active site. The span at 319-328 (RRRRAGRENG) shows a compositional bias: basic and acidic residues. Residues 319 to 350 (RRRRAGRENGNKIFNKSRGRLNSKLSIPDPAE) form a disordered region.

This sequence belongs to the TrhO family.

It carries out the reaction uridine(34) in tRNA + AH2 + O2 = 5-hydroxyuridine(34) in tRNA + A + H2O. Catalyzes oxygen-dependent 5-hydroxyuridine (ho5U) modification at position 34 in tRNAs. This is tRNA uridine(34) hydroxylase from Salmonella newport (strain SL254).